We begin with the raw amino-acid sequence, 2084 residues long: MAP kinase-activating death domain protein (2084 aa).

A uDENN domain is found at 25 to 352 (TPPMPKGLQG…VPVPGSTRVE (328 aa)). The interval 117 to 253 (PSSAAGSAGA…SPRASRKRTK (137 aa)) is disordered. Over residues 118-131 (SSAAGSAGAGNDRP) the composition is skewed to low complexity. Residues 132-152 (GNGGPGGHGGGAGGGAGGGGR) are compositionally biased toward gly residues. Basic and acidic residues predominate over residues 160–173 (FRRESWRKSMERSS). A compositionally biased stretch (low complexity) spans 174–183 (DSAFSSDYRS). Over residues 189–204 (DSDRELTSRRDSDQQR) the composition is skewed to basic and acidic residues. A compositionally biased stretch (basic residues) spans 205–215 (LHSHHSHHQPH). The segment covering 234 to 245 (DSESGGSHSPSP) has biased composition (polar residues). Residues 373–514 (RFSLVDFPLH…EGTILKNHLK (142 aa)) enclose the cDENN domain. The region spanning 516–678 (ALTSMTATNT…EWSLTPTNVA (163 aa)) is the dDENN domain. Disordered regions lie at residues 557–588 (TPPH…NSPA), 730–749 (QPTD…SSSY), 811–863 (VASK…TVGS), 891–963 (QESD…SQSS), 1058–1092 (HSAG…GNNF), 1115–1188 (FGKK…AENQ), and 1305–1382 (SSSL…GQST). Positions 558 to 588 (PPHSAQASQRNSMSAQGTISSRQPSPMNSPA) are enriched in polar residues. Low complexity predominate over residues 824–839 (SPVSSSSSRSDLSSPS). A compositionally biased stretch (basic and acidic residues) spans 913–925 (HPSDSESRPEKKI). The span at 946–963 (GSSGSSSSSPGRQSSQSS) shows a compositional bias: low complexity. Residues 1121–1131 (QKQVPVQQKQP) show a composition bias toward low complexity. Positions 1168–1183 (TQEELTRQQNQERSHS) are enriched in basic and acidic residues. Low complexity predominate over residues 1305-1315 (SSSLLSSHAAS). Composition is skewed to polar residues over residues 1324–1353 (RSPS…STQL) and 1370–1382 (RLSS…GQST). Residues 1490-1565 (GMDQGPIEMM…GLVYSQEVHN (76 aa)) form the Death domain. The span at 1794-1842 (DIHAQQKQKHQQQQQHQQPQQQQQPHQTTTQQNQPTAVASAVPTTTAPA) shows a compositional bias: low complexity. Disordered regions lie at residues 1794–1865 (DIHA…RHTV) and 1896–2084 (VPVP…HRKH). Polar residues predominate over residues 1845 to 1858 (VNPNRMTAKSQAGS). Positions 1896–1907 (VPVPPTPAPPTS) are enriched in pro residues. Over residues 1921 to 1932 (SQPSTESLASIS) the composition is skewed to polar residues. 2 stretches are compositionally biased toward pro residues: residues 1933 to 1953 (SPPP…PAIP) and 1983 to 1993 (QYTPQPPPPFV). Low complexity-rich tracts occupy residues 2001-2029 (LARA…HSQS) and 2059-2077 (ISGS…ASAS).

Belongs to the MADD family.

It is found in the cell membrane. The protein localises to the cytoplasm. In terms of biological role, guanyl-nucleotide exchange factor that regulates small GTPases. Converts GDP-bound inactive form of Rab3 to the GTP-bound active forms. This is MAP kinase-activating death domain protein from Drosophila melanogaster (Fruit fly).